Consider the following 385-residue polypeptide: Suppressor protein STP22 of temperature-sensitive alpha-factor receptor and arginine permease (385 aa).

The UEV domain occupies 12–161 (AVVNWLFKVI…LHEPPQDQAP (150 aa)). The disordered stretch occupies residues 155-219 (PPQDQAPSLP…DMDNTDISPT (65 aa)). Polar residues predominate over residues 168 to 177 (NTQLQQEQNT). Positions 178–201 (PPLPPKPKSPHLKPPLPPPPPPQP) are enriched in pro residues. Residues 272-300 (LRAVEQAIEQTMHSLNAQIDVLTANRAKV) adopt a coiled-coil conformation. The 64-residue stretch at 322–385 (TDGLNQLYNL…HIQRITSPLS (64 aa)) folds into the SB domain.

The protein belongs to the ubiquitin-conjugating enzyme family. UEV subfamily. Component of the ESCRT-I complex (endosomal sorting complex required for transport I) which consists of STP22, VPS28, SRN2 and MVB12 in a 1:1:1:1 stoichiometry. Interacts with HSE1 and VPS27. Interacts with MVB12 and SRN2.

It localises to the cytoplasm. Its subcellular location is the endosome. It is found in the late endosome membrane. Its function is as follows. Component of the ESCRT-I complex, a regulator of vesicular trafficking process. Binds to ubiquitinated cargo proteins and is required for the sorting of endocytic ubiquitinated cargos into multivesicular bodies (MVBs). Mediates the association to the ESCRT-0 complex. Required for vacuolar targeting of temperature-sensitive plasma membrane proteins STE2 and CAN1. The protein is Suppressor protein STP22 of temperature-sensitive alpha-factor receptor and arginine permease (STP22) of Saccharomyces cerevisiae (strain ATCC 204508 / S288c) (Baker's yeast).